The chain runs to 176 residues: Dual-action ribosomal maturation protein DarP (176 aa).

Belongs to the DarP family.

The protein resides in the cytoplasm. Member of a network of 50S ribosomal subunit biogenesis factors which assembles along the 30S-50S interface, preventing incorrect 23S rRNA structures from forming. Promotes peptidyl transferase center (PTC) maturation. The chain is Dual-action ribosomal maturation protein DarP from Aliivibrio fischeri (strain MJ11) (Vibrio fischeri).